The sequence spans 103 residues: Small ribosomal subunit protein uS10c (103 aa).

This sequence belongs to the universal ribosomal protein uS10 family. Part of the 30S ribosomal subunit.

The protein localises to the plastid. It localises to the chloroplast. Its function is as follows. Involved in the binding of tRNA to the ribosomes. The polypeptide is Small ribosomal subunit protein uS10c (Trieres chinensis (Marine centric diatom)).